The primary structure comprises 373 residues: Chaperone protein DnaJ (373 aa).

Residues 5-71 form the J domain; the sequence is DYYEILGVSR…EKRAMYDKFG (67 aa). Residues 144 to 226 form a CR-type zinc finger; sequence GVKIPLEYDR…CGGTGRIRKR (83 aa). Cys-157, Cys-160, Cys-174, Cys-177, Cys-200, Cys-203, Cys-214, and Cys-217 together coordinate Zn(2+). CXXCXGXG motif repeat units lie at residues 157–164, 174–181, 200–207, and 214–221; these read CEHCHGEG, CPKCHGTG, CNQCGGTG, and CRVCGGTG.

The protein belongs to the DnaJ family. Homodimer. Requires Zn(2+) as cofactor.

The protein resides in the cytoplasm. Its function is as follows. Participates actively in the response to hyperosmotic and heat shock by preventing the aggregation of stress-denatured proteins and by disaggregating proteins, also in an autonomous, DnaK-independent fashion. Unfolded proteins bind initially to DnaJ; upon interaction with the DnaJ-bound protein, DnaK hydrolyzes its bound ATP, resulting in the formation of a stable complex. GrpE releases ADP from DnaK; ATP binding to DnaK triggers the release of the substrate protein, thus completing the reaction cycle. Several rounds of ATP-dependent interactions between DnaJ, DnaK and GrpE are required for fully efficient folding. Also involved, together with DnaK and GrpE, in the DNA replication of plasmids through activation of initiation proteins. The polypeptide is Chaperone protein DnaJ (Thermosipho melanesiensis (strain DSM 12029 / CIP 104789 / BI429)).